The sequence spans 523 residues: Metalloprotease TIKI2 (523 aa).

Positions 1–26 are cleaved as a signal peptide; sequence MGKTMWARAVFLCFSVGTLLWQEVLT. Topologically, residues 27–499 are extracellular; the sequence is RRIPVDTGQC…HSQSNSSPKC (473 aa). N-linked (GlcNAc...) asparagine glycosylation is found at Asn-225, Asn-234, Asn-283, and Asn-341. The chain crosses the membrane as a helical span at residues 500 to 516; the sequence is LSASPAFLYTLVTLCLI. Topologically, residues 517–523 are cytoplasmic; it reads TTMRTRS.

This sequence belongs to the TIKI family. The cofactor is Mn(2+). Co(2+) is required as a cofactor.

It is found in the cell membrane. Functionally, metalloprotease that acts as a negative regulator of the Wnt signaling pathway by mediating the cleavage of the N-terminal residues of a subset of Wnt proteins. Following cleavage, Wnt proteins become oxidized and form large disulfide-bond oligomers, leading to their inactivation. Able to cleave wnt8. Required for head formation. The chain is Metalloprotease TIKI2 (trabd2b) from Xenopus tropicalis (Western clawed frog).